The primary structure comprises 590 residues: Bacillolysin (590 aa).

An N-terminal signal peptide occupies residues 1–24; that stretch reads MKKVWFSLLGGAMLLGSVASGASA. Positions 25-286 are cleaved as a propeptide — activation peptide; that stretch reads ESSVSGPAQL…GSIVFQYDII (262 aa). Ca(2+) contacts are provided by aspartate 339, aspartate 341, and aspartate 419. Histidine 423 contacts Zn(2+). Glutamate 424 is an active-site residue. Residues histidine 427 and glutamate 447 each contribute to the Zn(2+) site. Ca(2+) is bound by residues aspartate 466, tyrosine 469, threonine 470, isoleucine 473, and aspartate 476. The active-site Proton donor is the histidine 507.

It belongs to the peptidase M4 family. Requires Ca(2+) as cofactor. It depends on Zn(2+) as a cofactor.

It localises to the secreted. The catalysed reaction is Similar, but not identical, to that of thermolysin.. Involved in the generation of beta- and alpha-amylases from the large amylase precursor. This is Bacillolysin (npr) from Paenibacillus polymyxa (Bacillus polymyxa).